Consider the following 143-residue polypeptide: uncharacterized protein (143 aa).

The segment at 111–143 (VTQDISHTSGKSPTPKAKSSSPKKSKKKNWIPL) is disordered. The segment covering 119 to 130 (SGKSPTPKAKSS) has biased composition (low complexity). Residues 131-143 (SPKKSKKKNWIPL) are compositionally biased toward basic residues.

This sequence belongs to the chlamydial CPn_0742/CT_635/TC_0003 family.

This is an uncharacterized protein from Chlamydia muridarum (strain MoPn / Nigg).